We begin with the raw amino-acid sequence, 428 residues long: Sarcosine reductase complex component B subunit alpha (428 aa).

Cys-242 is modified (pyruvic acid (Cys)).

Heterotetramer of two alpha and two beta subunits. Component of the sarcosine reductase complex, together with components A and C. PB is substrate specific. In terms of processing, the peptide chain is cleaved into beta and alpha chains, and the alpha chain N-terminal cysteine is deaminated and oxidized to form a reactive pyruvoyl group.

The enzyme catalyses acetyl phosphate + methylamine + [thioredoxin]-disulfide + H2O = sarcosine + [thioredoxin]-dithiol + phosphate + H(+). In terms of biological role, in the first step of sarcosine reductase, the substrate is bound to component PB via a Schiff base intermediate. Then the PB-activated substrate is nucleophilically attacked by the selenol anion of component PA to transform it to a carboxymethylated selenoether and the respective amine. By action of component PC, acetyl phosphate is formed, leaving component PA in its oxidized state. Finally component PA becomes reduced by the thioredoxin system to start a new catalytic cycle of reductive deamination. The chain is Sarcosine reductase complex component B subunit alpha (grdG) from Peptoclostridium acidaminophilum (Eubacterium acidaminophilum).